The primary structure comprises 779 residues: Probable ATP-dependent RNA helicase DHX40 (779 aa).

The interval 1-53 (MSRFPAVAGRAPRRQEEGERSRDLQEERPSAVCIADREEKGCTSQEGGTTPTF) is disordered. The span at 13–41 (RRQEEGERSRDLQEERPSAVCIADREEKG) shows a compositional bias: basic and acidic residues. Residues 42 to 53 (CTSQEGGTTPTF) are compositionally biased toward polar residues. One can recognise a Helicase ATP-binding domain in the interval 63 to 231 (IQAVRDNSFL…FGNCPIFDIP (169 aa)). 76-83 (GNTGSGKT) is a binding site for ATP. A DEAH box motif is present at residues 173-176 (DEAH). The region spanning 263–442 (TMDIHLNEMA…SVVLTLKCLA (180 aa)) is the Helicase C-terminal domain. The tract at residues 737-779 (SKDVLKKMQRRNDDKSISDARARFLERKQQRTQDHSDTRKETG) is disordered.

It belongs to the DEAD box helicase family. DEAH subfamily.

It carries out the reaction ATP + H2O = ADP + phosphate + H(+). Functionally, probable ATP-dependent RNA helicase. This chain is Probable ATP-dependent RNA helicase DHX40 (DHX40), found in Pongo abelii (Sumatran orangutan).